Consider the following 419-residue polypeptide: tRNA modification GTPase MnmE (419 aa).

Positions 2, 59, and 99 each coordinate (6S)-5-formyl-5,6,7,8-tetrahydrofolate. The 147-residue stretch at 197–343 (GLSVVIAGPP…LHTMIVEMAR (147 aa)) folds into the TrmE-type G domain. Asparagine 207 contributes to the K(+) binding site. Residues 207 to 212 (NAGKST), 226 to 232 (SPVAGTT), and 251 to 254 (DTAG) each bind GTP. Residue serine 211 participates in Mg(2+) binding. Residues serine 226, valine 228, and threonine 231 each coordinate K(+). Threonine 232 serves as a coordination point for Mg(2+). Lysine 419 provides a ligand contact to (6S)-5-formyl-5,6,7,8-tetrahydrofolate.

Belongs to the TRAFAC class TrmE-Era-EngA-EngB-Septin-like GTPase superfamily. TrmE GTPase family. Homodimer. Heterotetramer of two MnmE and two MnmG subunits. It depends on K(+) as a cofactor.

Its subcellular location is the cytoplasm. Exhibits a very high intrinsic GTPase hydrolysis rate. Involved in the addition of a carboxymethylaminomethyl (cmnm) group at the wobble position (U34) of certain tRNAs, forming tRNA-cmnm(5)s(2)U34. The protein is tRNA modification GTPase MnmE of Sphingopyxis alaskensis (strain DSM 13593 / LMG 18877 / RB2256) (Sphingomonas alaskensis).